Consider the following 71-residue polypeptide: Heat-stable enterotoxin B (71 aa).

Positions 1-19 (MKKIILALVLMLFSFCTLG) are cleaved as a signal peptide. A propeptide spanning residues 20–52 (QETASMHLDDTLSAPIAAEINRKACDTQTPSPS) is cleaved from the precursor. 3 disulfides stabilise this stretch: Cys59-Cys64, Cys60-Cys68, and Cys63-Cys71.

Belongs to the heat-stable enterotoxin family.

The protein resides in the secreted. Toxin which activates the particulate form of guanylate cyclase and increases cyclic GMP levels within the host intestinal epithelial cells. Could play an important role in pathogenesis. The sequence is that of Heat-stable enterotoxin B (ystB) from Yersinia enterocolitica.